A 413-amino-acid polypeptide reads, in one-letter code: uncharacterized protein (413 aa).

7 helical membrane-spanning segments follow: residues 10 to 32, 162 to 184, 189 to 211, 232 to 254, 259 to 276, 288 to 310, and 325 to 347; these read GLTI…GRLP, VFLH…LVFL, LLPR…AFLV, LSFR…LFFF, YSYS…ILLV, ALMV…SFVT, and FAYA…SLIL.

It is found in the cell membrane. This is an uncharacterized protein from Aquifex aeolicus (strain VF5).